Here is a 465-residue protein sequence, read N- to C-terminus: Argininosuccinate lyase (465 aa).

Belongs to the lyase 1 family. Argininosuccinate lyase subfamily.

It localises to the cytoplasm. It catalyses the reaction 2-(N(omega)-L-arginino)succinate = fumarate + L-arginine. It participates in amino-acid biosynthesis; L-arginine biosynthesis; L-arginine from L-ornithine and carbamoyl phosphate: step 3/3. The chain is Argininosuccinate lyase from Deinococcus geothermalis (strain DSM 11300 / CIP 105573 / AG-3a).